Consider the following 236-residue polypeptide: Uridylate kinase (236 aa).

10-13 provides a ligand contact to ATP; that stretch reads KLSG. G52 provides a ligand contact to UMP. ATP is bound by residues G53 and R57. UMP-binding positions include D72 and 133–140; that span reads TGNPFFTT. 3 residues coordinate ATP: T160, Y166, and D169.

It belongs to the UMP kinase family. In terms of assembly, homohexamer.

It is found in the cytoplasm. It carries out the reaction UMP + ATP = UDP + ADP. It participates in pyrimidine metabolism; CTP biosynthesis via de novo pathway; UDP from UMP (UMPK route): step 1/1. With respect to regulation, inhibited by UTP. Functionally, catalyzes the reversible phosphorylation of UMP to UDP. This is Uridylate kinase from Ralstonia nicotianae (strain ATCC BAA-1114 / GMI1000) (Ralstonia solanacearum).